The chain runs to 707 residues: MSEQLRQTFANAKKENRNALVTFMTAGYPTVKDTVPILKGFQDGGVDIIELGMPFSDPIADGPTIQLSNTVALQNGVTLPQTLEMVSQARNEGVTVPIILMGYYNPILNYGEERFIQDAAKAGANGFIIVDLPPEEALKVRNYINDNGLSLIPLVAPSTTDERLELLSHIADSFVYVVSRMGTTGVQSSVASDLDELISRVRKYTKDTPLAVGFGVSTREHFQSVGSVADGVVIGSKIVTLCGDAPEGKRYDVAKEYVQGILNGAKHKVLSKDEFFAFQKESLKSANVKKEILDEFDENHKHPIRFGDFGGQYVPEALHACLRELEKGFDEAVADPTFWEDFKSLYSYIGRPSSLHKAERLTEHCQGAQIWLKREDLNHTGSHKINNALAQVLLAKRLGKKNVIAETGAGQHGVATATACAKFGLTCTVFMGAEDVRRQALNVFRMRILGAKVIAVTNGTKTLRDATSEAFRFWVTNLKTTYYVVGSAIGPHPYPTLVRTFQSVIGKETKEQFAAMNNGKLPDAVVACVGGGSNSTGMFSPFEHDTSVKLLGVEAGGDGVDTKFHSATLTAGRPGVFHGVKTYVLQDSDGQVHDTHSVSAGLDYPGVGPELAYWKSTGRAQFIAATDAQALLGFKLLSQLEGIIPALESSHAVYGACELAKTMKPDQHLVINISGRGDKDVQSVAEVLPKLGPKIGWDLRFEEDPSA.

Residues 1-297 are tryptophan synthase alpha chain; that stretch reads MSEQLRQTFA…VKKEILDEFD (297 aa). Active-site proton acceptor residues include glutamate 50 and aspartate 61. The interval 298–707 is tryptophan synthase beta chain; sequence ENHKHPIRFG…DLRFEEDPSA (410 aa). An N6-(pyridoxal phosphate)lysine modification is found at lysine 384. A phosphoserine mark is found at serine 540 and serine 683.

In the N-terminal section; belongs to the TrpA family. This sequence in the C-terminal section; belongs to the TrpB family. Requires pyridoxal 5'-phosphate as cofactor.

It catalyses the reaction (1S,2R)-1-C-(indol-3-yl)glycerol 3-phosphate + L-serine = D-glyceraldehyde 3-phosphate + L-tryptophan + H2O. The protein operates within amino-acid biosynthesis; L-tryptophan biosynthesis; L-tryptophan from chorismate: step 5/5. The chain is Tryptophan synthase (TRP5) from Saccharomyces cerevisiae (strain ATCC 204508 / S288c) (Baker's yeast).